Consider the following 393-residue polypeptide: Probable acetyl-CoA acyltransferase (393 aa).

The active-site Acyl-thioester intermediate is Cys88. Catalysis depends on proton acceptor residues His349 and Cys378.

It belongs to the thiolase-like superfamily. Thiolase family.

Its subcellular location is the cytoplasm. The enzyme catalyses 2 acetyl-CoA = acetoacetyl-CoA + CoA. In Staphylococcus aureus (strain bovine RF122 / ET3-1), this protein is Probable acetyl-CoA acyltransferase.